The following is a 121-amino-acid chain: MDKKVTRLRRAVPTRRKITQLGVHRLSVFRSNQHIYANIISPEGDRVVVSASTLEAEVRTQLAGQSGAGGNAAAAALIGKRVAEKAKAAGIELVAFDRSGFRYHGRVKALADAAREAGLKF.

It belongs to the universal ribosomal protein uL18 family. Part of the 50S ribosomal subunit; part of the 5S rRNA/L5/L18/L25 subcomplex. Contacts the 5S and 23S rRNAs.

Its function is as follows. This is one of the proteins that bind and probably mediate the attachment of the 5S RNA into the large ribosomal subunit, where it forms part of the central protuberance. This chain is Large ribosomal subunit protein uL18, found in Bordetella avium (strain 197N).